Consider the following 212-residue polypeptide: Peptide methionine sulfoxide reductase MsrA (212 aa).

C51 is an active-site residue.

Belongs to the MsrA Met sulfoxide reductase family.

The enzyme catalyses L-methionyl-[protein] + [thioredoxin]-disulfide + H2O = L-methionyl-(S)-S-oxide-[protein] + [thioredoxin]-dithiol. It catalyses the reaction [thioredoxin]-disulfide + L-methionine + H2O = L-methionine (S)-S-oxide + [thioredoxin]-dithiol. Has an important function as a repair enzyme for proteins that have been inactivated by oxidation. Catalyzes the reversible oxidation-reduction of methionine sulfoxide in proteins to methionine. The protein is Peptide methionine sulfoxide reductase MsrA of Vibrio cholerae serotype O1 (strain ATCC 39541 / Classical Ogawa 395 / O395).